Consider the following 486-residue polypeptide: N-succinylglutamate 5-semialdehyde dehydrogenase (486 aa).

NAD(+) is bound at residue glycine 221 to glycine 226. Residues glutamate 244 and cysteine 278 contribute to the active site.

The protein belongs to the aldehyde dehydrogenase family. AstD subfamily.

It catalyses the reaction N-succinyl-L-glutamate 5-semialdehyde + NAD(+) + H2O = N-succinyl-L-glutamate + NADH + 2 H(+). Its pathway is amino-acid degradation; L-arginine degradation via AST pathway; L-glutamate and succinate from L-arginine: step 4/5. Functionally, catalyzes the NAD-dependent reduction of succinylglutamate semialdehyde into succinylglutamate. This Chromobacterium violaceum (strain ATCC 12472 / DSM 30191 / JCM 1249 / CCUG 213 / NBRC 12614 / NCIMB 9131 / NCTC 9757 / MK) protein is N-succinylglutamate 5-semialdehyde dehydrogenase.